The primary structure comprises 443 residues: ATP-dependent protease ATPase subunit HslU (443 aa).

ATP is bound by residues Ile19, 61 to 66 (GVGKTE), Asp256, Glu321, and Arg393.

This sequence belongs to the ClpX chaperone family. HslU subfamily. A double ring-shaped homohexamer of HslV is capped on each side by a ring-shaped HslU homohexamer. The assembly of the HslU/HslV complex is dependent on binding of ATP.

The protein resides in the cytoplasm. Its function is as follows. ATPase subunit of a proteasome-like degradation complex; this subunit has chaperone activity. The binding of ATP and its subsequent hydrolysis by HslU are essential for unfolding of protein substrates subsequently hydrolyzed by HslV. HslU recognizes the N-terminal part of its protein substrates and unfolds these before they are guided to HslV for hydrolysis. The polypeptide is ATP-dependent protease ATPase subunit HslU (Ralstonia pickettii (strain 12J)).